The sequence spans 260 residues: Hydroxyethylthiazole kinase 1 (260 aa).

M39 provides a ligand contact to substrate. Residues R115 and T160 each contribute to the ATP site. Substrate is bound at residue G187.

This sequence belongs to the Thz kinase family. Requires Mg(2+) as cofactor.

It catalyses the reaction 5-(2-hydroxyethyl)-4-methylthiazole + ATP = 4-methyl-5-(2-phosphooxyethyl)-thiazole + ADP + H(+). It participates in cofactor biosynthesis; thiamine diphosphate biosynthesis; 4-methyl-5-(2-phosphoethyl)-thiazole from 5-(2-hydroxyethyl)-4-methylthiazole: step 1/1. In terms of biological role, catalyzes the phosphorylation of the hydroxyl group of 4-methyl-5-beta-hydroxyethylthiazole (THZ). This Streptococcus pneumoniae serotype 2 (strain D39 / NCTC 7466) protein is Hydroxyethylthiazole kinase 1.